Here is a 438-residue protein sequence, read N- to C-terminus: Argininosuccinate lyase (438 aa).

This sequence belongs to the lyase 1 family. Argininosuccinate lyase subfamily.

The protein resides in the cytoplasm. The catalysed reaction is 2-(N(omega)-L-arginino)succinate = fumarate + L-arginine. The protein operates within amino-acid biosynthesis; L-arginine biosynthesis; L-arginine from L-ornithine and carbamoyl phosphate: step 3/3. In Clostridioides difficile (strain 630) (Peptoclostridium difficile), this protein is Argininosuccinate lyase.